Reading from the N-terminus, the 189-residue chain is Peptidyl-tRNA hydrolase (189 aa).

Tyr-14 is a binding site for tRNA. The active-site Proton acceptor is His-19. 3 residues coordinate tRNA: Tyr-64, Asn-66, and Asn-112.

The protein belongs to the PTH family. In terms of assembly, monomer.

The protein resides in the cytoplasm. It carries out the reaction an N-acyl-L-alpha-aminoacyl-tRNA + H2O = an N-acyl-L-amino acid + a tRNA + H(+). Functionally, hydrolyzes ribosome-free peptidyl-tRNAs (with 1 or more amino acids incorporated), which drop off the ribosome during protein synthesis, or as a result of ribosome stalling. Its function is as follows. Catalyzes the release of premature peptidyl moieties from peptidyl-tRNA molecules trapped in stalled 50S ribosomal subunits, and thus maintains levels of free tRNAs and 50S ribosomes. The chain is Peptidyl-tRNA hydrolase from Dehalococcoides mccartyi (strain CBDB1).